Consider the following 367-residue polypeptide: DNA replication and repair protein RecF (367 aa).

Residue 30-37 (GSNGSGKT) coordinates ATP.

The protein belongs to the RecF family.

The protein resides in the cytoplasm. In terms of biological role, the RecF protein is involved in DNA metabolism; it is required for DNA replication and normal SOS inducibility. RecF binds preferentially to single-stranded, linear DNA. It also seems to bind ATP. The sequence is that of DNA replication and repair protein RecF from Pseudomonas putida (strain ATCC 700007 / DSM 6899 / JCM 31910 / BCRC 17059 / LMG 24140 / F1).